The sequence spans 68 residues: Large ribosomal subunit protein uL30 (68 aa).

The protein belongs to the universal ribosomal protein uL30 family. As to quaternary structure, part of the 50S ribosomal subunit.

This chain is Large ribosomal subunit protein uL30, found in Bartonella tribocorum (strain CIP 105476 / IBS 506).